A 351-amino-acid chain; its full sequence is Autoinducer 2 import system permease protein LsrC (351 aa).

The next 9 helical transmembrane spans lie at 14–34 (LLAI…YFSL), 39–59 (MIFS…LVML), 70–90 (ITGL…GLAA), 93–113 (LFAL…VTWL), 115–135 (IPAI…MLLL), 155–175 (ILFS…AMAW), 213–233 (MNGV…GFIP), 252–272 (GISL…AFLL), and 284–304 (LPAW…LVFD).

This sequence belongs to the binding-protein-dependent transport system permease family. AraH/RbsC subfamily. As to quaternary structure, the complex is composed of two ATP-binding proteins (LsrA), two transmembrane proteins (LsrC and LsrD) and a solute-binding protein (LsrB).

It localises to the cell inner membrane. In terms of biological role, part of the ABC transporter complex LsrABCD involved in autoinducer 2 (AI-2) import. Probably responsible for the translocation of the substrate across the membrane. The chain is Autoinducer 2 import system permease protein LsrC (lsrC) from Yersinia pestis bv. Antiqua (strain Antiqua).